We begin with the raw amino-acid sequence, 435 residues long: Methylenetetrahydrofolate--tRNA-(uracil-5-)-methyltransferase TrmFO (435 aa).

FAD is bound at residue 9-14; it reads GAGLAG.

The protein belongs to the MnmG family. TrmFO subfamily. The cofactor is FAD.

The protein localises to the cytoplasm. The enzyme catalyses uridine(54) in tRNA + (6R)-5,10-methylene-5,6,7,8-tetrahydrofolate + NADH + H(+) = 5-methyluridine(54) in tRNA + (6S)-5,6,7,8-tetrahydrofolate + NAD(+). It carries out the reaction uridine(54) in tRNA + (6R)-5,10-methylene-5,6,7,8-tetrahydrofolate + NADPH + H(+) = 5-methyluridine(54) in tRNA + (6S)-5,6,7,8-tetrahydrofolate + NADP(+). Its function is as follows. Catalyzes the folate-dependent formation of 5-methyl-uridine at position 54 (M-5-U54) in all tRNAs. The chain is Methylenetetrahydrofolate--tRNA-(uracil-5-)-methyltransferase TrmFO from Staphylococcus aureus (strain JH1).